The primary structure comprises 302 residues: tRNA demethylase abh1 (302 aa).

Substrate-binding positions include Trp-142 and 149–151 (YDW). The Fe2OG dioxygenase domain maps to 187 to 299 (KAEAAIVNFY…RVNFNVRQVR (113 aa)). 194-196 (NFY) is a 2-oxoglutarate binding site. Fe cation-binding residues include His-205 and Asp-207. A substrate-binding site is contributed by Arg-235. Position 261 (His-261) interacts with Fe cation. Residue 290 to 296 (RVNFNVR) participates in 2-oxoglutarate binding.

The protein belongs to the alkB family. Fe(2+) serves as cofactor.

It is found in the cytoplasm. The protein localises to the nucleus. The catalysed reaction is an N(1)-methyladenosine in tRNA + 2-oxoglutarate + O2 = an adenosine in tRNA + formaldehyde + succinate + CO2. It catalyses the reaction N(1)-methyladenosine(58) in tRNA + 2-oxoglutarate + O2 = adenosine(58) in tRNA + formaldehyde + succinate + CO2. Functionally, dioxygenase that acts as on nucleic acids, such as DNA and tRNA. Requires molecular oxygen, alpha-ketoglutarate and iron. Mainly acts as a tRNA demethylase by removing N(1)-methyladenine from various tRNAs, with a preference for N(1)-methyladenine at position 58 (m1A58) present on a stem loop structure of tRNAs. Acts as a regulator of translation initiation and elongation. Does not appear to possess DNA repair activity; no activity towards methylated DNA or etheno adducts. Exhibits a weak and unstable DNA lyase activity; this activity is probably not biologically significant and proceeds by a mechanism different from the classical dioxygenase reaction as it does not require 2-oxoglutarate or iron. This Schizosaccharomyces pombe (strain 972 / ATCC 24843) (Fission yeast) protein is tRNA demethylase abh1 (abh1).